Reading from the N-terminus, the 576-residue chain is Urease subunit alpha (576 aa).

One can recognise a Urease domain in the interval 132-576; sequence GGIDTHIHFI…LPMAQRYFLF (445 aa). Residues histidine 137, histidine 139, and lysine 220 each contribute to the Ni(2+) site. Lysine 220 is modified (N6-carboxylysine). Histidine 222 serves as a coordination point for substrate. 2 residues coordinate Ni(2+): histidine 249 and histidine 275. Histidine 323 (proton donor) is an active-site residue. Aspartate 363 contacts Ni(2+).

This sequence belongs to the metallo-dependent hydrolases superfamily. Urease alpha subunit family. Heterotrimer of UreA (gamma), UreB (beta) and UreC (alpha) subunits. Three heterotrimers associate to form the active enzyme. It depends on Ni cation as a cofactor. Post-translationally, carboxylation allows a single lysine to coordinate two nickel ions.

The protein localises to the cytoplasm. It catalyses the reaction urea + 2 H2O + H(+) = hydrogencarbonate + 2 NH4(+). It participates in nitrogen metabolism; urea degradation; CO(2) and NH(3) from urea (urease route): step 1/1. This is Urease subunit alpha from Paenarthrobacter aurescens (strain TC1).